Here is a 296-residue protein sequence, read N- to C-terminus: Cytidine deaminase (296 aa).

2 consecutive CMP/dCMP-type deaminase domains span residues 52 to 167 (SPVE…YLPD) and 191 to 296 (QGHD…YISL). Residue 93 to 95 (NQE) participates in substrate binding. His-106 serves as a coordination point for Zn(2+). The Proton donor role is filled by Glu-108. Residues Cys-133 and Cys-136 each coordinate Zn(2+).

It belongs to the cytidine and deoxycytidylate deaminase family. As to quaternary structure, homodimer. Zn(2+) serves as cofactor.

The catalysed reaction is cytidine + H2O + H(+) = uridine + NH4(+). It carries out the reaction 2'-deoxycytidine + H2O + H(+) = 2'-deoxyuridine + NH4(+). This enzyme scavenges exogenous and endogenous cytidine and 2'-deoxycytidine for UMP synthesis. The protein is Cytidine deaminase of Mannheimia succiniciproducens (strain KCTC 0769BP / MBEL55E).